The sequence spans 352 residues: MKISVAVSGASGYAGGEVLRLLANHPQVQIGAITAHSNAGSRLGELQPHLYSLADRLLEENSVANLAGHDVVFLALPHGASGEIAAQLPAETLVIDAGADHRLVYAGAWQEFYHSEHAGTWPYGLPELPIAHGRRQREELRTTKRIAVPGCYPTSALLALAPGFAAGALLADDVVIVSASGTSGAGKAAKTNLLGSEVIGSMAPYGVGGVHRHTPEIEQGLSSVAGEQVTVSFTPTLAPMSRGILTTATAKVAPQLLKETSAAQLRQIWVDAYEDEEFIHVLPEGQWPATQSVLGSNHVGIQVALDERTGRVIVCSVIDNLTKGTAGAAVQSMNIALGLEENLGLKQLGVAP.

Residue Cys151 is part of the active site.

It belongs to the NAGSA dehydrogenase family. Type 1 subfamily.

Its subcellular location is the cytoplasm. It carries out the reaction N-acetyl-L-glutamate 5-semialdehyde + phosphate + NADP(+) = N-acetyl-L-glutamyl 5-phosphate + NADPH + H(+). Its pathway is amino-acid biosynthesis; L-arginine biosynthesis; N(2)-acetyl-L-ornithine from L-glutamate: step 3/4. Functionally, catalyzes the NADPH-dependent reduction of N-acetyl-5-glutamyl phosphate to yield N-acetyl-L-glutamate 5-semialdehyde. The polypeptide is N-acetyl-gamma-glutamyl-phosphate reductase (Renibacterium salmoninarum (strain ATCC 33209 / DSM 20767 / JCM 11484 / NBRC 15589 / NCIMB 2235)).